Here is a 212-residue protein sequence, read N- to C-terminus: Pyridoxine/pyridoxamine 5'-phosphate oxidase (212 aa).

Substrate-binding positions include 8–11 and K66; that span reads RREY. Residues 61 to 66, 76 to 77, R82, K83, and Q105 contribute to the FMN site; these read RIVLLK and FT. Substrate contacts are provided by Y123, R127, and S131. Residues 140–141 and W185 contribute to the FMN site; that span reads QS. 191–193 contributes to the substrate binding site; that stretch reads RLH. An FMN-binding site is contributed by R195.

The protein belongs to the pyridoxamine 5'-phosphate oxidase family. As to quaternary structure, homodimer. FMN serves as cofactor.

The enzyme catalyses pyridoxamine 5'-phosphate + O2 + H2O = pyridoxal 5'-phosphate + H2O2 + NH4(+). It carries out the reaction pyridoxine 5'-phosphate + O2 = pyridoxal 5'-phosphate + H2O2. The protein operates within cofactor metabolism; pyridoxal 5'-phosphate salvage; pyridoxal 5'-phosphate from pyridoxamine 5'-phosphate: step 1/1. Its pathway is cofactor metabolism; pyridoxal 5'-phosphate salvage; pyridoxal 5'-phosphate from pyridoxine 5'-phosphate: step 1/1. In terms of biological role, catalyzes the oxidation of either pyridoxine 5'-phosphate (PNP) or pyridoxamine 5'-phosphate (PMP) into pyridoxal 5'-phosphate (PLP). This is Pyridoxine/pyridoxamine 5'-phosphate oxidase from Shewanella sp. (strain MR-4).